The primary structure comprises 260 residues: Ubiquinone/menaquinone biosynthesis C-methyltransferase UbiE (260 aa).

S-adenosyl-L-methionine-binding positions include Thr83, Asp104, and 132–133 (NA).

This sequence belongs to the class I-like SAM-binding methyltransferase superfamily. MenG/UbiE family.

It carries out the reaction a 2-demethylmenaquinol + S-adenosyl-L-methionine = a menaquinol + S-adenosyl-L-homocysteine + H(+). It catalyses the reaction a 2-methoxy-6-(all-trans-polyprenyl)benzene-1,4-diol + S-adenosyl-L-methionine = a 5-methoxy-2-methyl-3-(all-trans-polyprenyl)benzene-1,4-diol + S-adenosyl-L-homocysteine + H(+). The protein operates within quinol/quinone metabolism; menaquinone biosynthesis; menaquinol from 1,4-dihydroxy-2-naphthoate: step 2/2. It participates in cofactor biosynthesis; ubiquinone biosynthesis. Functionally, methyltransferase required for the conversion of demethylmenaquinol (DMKH2) to menaquinol (MKH2) and the conversion of 2-polyprenyl-6-methoxy-1,4-benzoquinol (DDMQH2) to 2-polyprenyl-3-methyl-6-methoxy-1,4-benzoquinol (DMQH2). This Bartonella bacilliformis (strain ATCC 35685 / KC583 / Herrer 020/F12,63) protein is Ubiquinone/menaquinone biosynthesis C-methyltransferase UbiE.